The following is a 581-amino-acid chain: Pectinesterase 3 (581 aa).

An N-terminal signal peptide occupies residues 1–55; it reads MDTIKSFKGYGKVNELEQQAYEKKTRKRLIIIAVSSIVLIAVIIAAVAGVVIHNR. N-linked (GlcNAc...) asparagine glycosylation is found at Asn101, Asn156, Asn200, Asn217, and Asn268. Thr348 and Gln378 together coordinate substrate. The active-site Proton donor is the Asp401. A disulfide bridge links Cys415 with Cys435. The active-site Nucleophile is Asp422. An N-linked (GlcNAc...) asparagine glycan is attached at Asn477. Positions 486 and 488 each coordinate substrate.

It in the N-terminal section; belongs to the PMEI family. In the C-terminal section; belongs to the pectinesterase family.

It localises to the secreted. The protein localises to the cell wall. It catalyses the reaction [(1-&gt;4)-alpha-D-galacturonosyl methyl ester](n) + n H2O = [(1-&gt;4)-alpha-D-galacturonosyl](n) + n methanol + n H(+). It participates in glycan metabolism; pectin degradation; 2-dehydro-3-deoxy-D-gluconate from pectin: step 1/5. In terms of biological role, may have roles in the deposition of pectin in developing tissues and in the wall loosening and cell separation that occurs in cell expansion, fruit ripening and abscission. The protein is Pectinesterase 3 (MPE3) of Phaseolus vulgaris (Kidney bean).